The primary structure comprises 260 residues: Serine protease VLSP-1 (260 aa).

The first 18 residues, 1–18 (MVLIRVLANLLVLHLSYA), serve as a signal peptide directing secretion. Residues 19-24 (QKSSEL) constitute a propeptide that is removed on maturation. The Peptidase S1 domain occupies 25–251 (VIGGDECNIN…YSDWIQSIIA (227 aa)). Cystine bridges form between cysteine 31/cysteine 165, cysteine 52/cysteine 68, cysteine 100/cysteine 258, cysteine 144/cysteine 212, cysteine 176/cysteine 191, and cysteine 202/cysteine 227. Asparagine 44 carries N-linked (GlcNAc...) asparagine glycosylation. The Charge relay system role is filled by histidine 67. N-linked (GlcNAc...) asparagine glycosylation is present at asparagine 103. The Charge relay system role is filled by aspartate 112. An N-linked (GlcNAc...) asparagine glycan is attached at asparagine 156. The Charge relay system role is filled by serine 206.

It belongs to the peptidase S1 family. Snake venom subfamily. Expressed by the venom gland.

The protein localises to the secreted. Functionally, snake venom serine protease that may act in the hemostasis system of the prey. In Macrovipera lebetinus (Levantine viper), this protein is Serine protease VLSP-1.